Consider the following 473-residue polypeptide: Phenolic acid decarboxylase (473 aa).

Mn(2+)-binding residues include asparagine 160, histidine 182, and glutamate 224. Prenylated FMN contacts are provided by residues 160–165 (NVGIYR) and 181–182 (QH). The active-site Proton donor is the glutamate 273.

The protein belongs to the UbiD family. YclC subfamily. The cofactor is prenylated FMN. It depends on Mn(2+) as a cofactor.

It carries out the reaction 4-hydroxybenzoate + H(+) = phenol + CO2. The enzyme catalyses vanillate + H(+) = guaiacol + CO2. Its function is as follows. Involved in the non-oxidative decarboxylation and detoxification of phenolic derivatives under both aerobic and anaerobic conditions. Phenolic acid decarboxylase that catalyzes the reversible decarboxylation of 4-hydroxybenzoate and vanillate. Could also catalyze the decarboxylation of salicylate. Is not active on di- and tri-hydroxybenzoate derivatives. The chain is Phenolic acid decarboxylase from Bacillus subtilis (strain 168).